Consider the following 323-residue polypeptide: Replication factor C subunit 4 (323 aa).

ATP is bound by residues valine 12, valine 24, 49–57 (GMPGIGKTT), asparagine 145, and arginine 203.

This sequence belongs to the activator 1 small subunits family. Replication factor C (RFC) is a heteropentamer of subunits RFC1, RFC2, RFC3, RFC4 and RFC5 and forms a complex with POL30/PCNA in the presence of ATP. Component of the RAD24-RFC complex which consists of RAD14, RFC2, RFC3, RFC4 and RFC5 and associates with the checkpoint clamp DDC1:MEC3:RAD17 complex. Component of the ELG1-RFC complex which consists of ELG1, RFC2, RFC3, RFC4 and RFC5. Component of the CTF18-RFC complex, which consists of CTF18, CTF8, DCC1, RFC2, RFC3, RFC4 and RFC5. RFC4 interacts with ECO1.

The protein localises to the nucleus. Its function is as follows. Component of ATP-dependent clamp loader (RFC and RFC-like) complexes for DNA clamps, such as the POL30/PCNA homotrimer and the checkpoint clamp DDC1:MEC3:RAD17 complex. During a clamp loading circle, the RFC:clamp complex binds to DNA and the recognition of the double-stranded/single-stranded junction stimulates ATP hydrolysis by RFC. The complex presumably provides bipartite ATP sites in which one subunit supplies a catalytic site for hydrolysis of ATP bound to the neighboring subunit. Dissociation of RFC from the clamp leaves the clamp encircling DNA. Component of the replication factor C (RFC or activator 1) complex which loads POL30/PCNA and acts during elongation of primed DNA templates by DNA polymerase delta and epsilon. RFC has an essential but redundant activity in sister chromatid cohesion establishment. Component of the RFC-like complex CTF18-RFC which is required for efficient establishment of chromosome cohesion during S-phase and may load or unload POL30/PCNA. Component of the RFC-like RAD24-RFC complex which loads the checkpoint clamp DDC1:MEC3:RAD17 complex and is involved in DNA repair pathways. Component of the RFC-like ELG1-RFC complex which appears to have a role in DNA replication, replication fork re-start, recombination and repair. This chain is Replication factor C subunit 4 (RFC4), found in Saccharomyces cerevisiae (strain ATCC 204508 / S288c) (Baker's yeast).